A 262-amino-acid polypeptide reads, in one-letter code: Glycerol uptake facilitator protein (262 aa).

At 1 to 7 (MNFCSKK) the chain is on the cytoplasmic side. The chain crosses the membrane as a helical span at residues 8–36 (KILKQCFFEFLGTGLIIFLGISSLVVSKL). Residues 37 to 41 (TNFHF) lie on the Extracellular side of the membrane. A helical membrane pass occupies residues 42-62 (NHCEISCIWGLGVFISICFCS). Topologically, residues 63-65 (SVS) are cytoplasmic. The stretch at 66 to 69 (GAHL) is an intramembrane region. Residues 70–72 (NPA) carry the NPA 1 motif. The helical intramembrane region spans 70 to 80 (NPAITIFLFLS). Residues 81 to 86 (SQFNKK) lie on the Cytoplasmic side of the membrane. A helical membrane pass occupies residues 87–110 (KVIPYILSQISGTFFFTFLIYLIF). At 111–145 (NNLLNSFESKYNIVRGTKKSLELASLFCVFPKENY) the chain is on the extracellular side. A helical transmembrane segment spans residues 146–171 (NFIHDFILEILIGIIFIIILMKLSEK). Over 172 to 180 (NNLFKFYKF) the chain is Cytoplasmic. A helical membrane pass occupies residues 181 to 197 (INPFLIGTLVIIINLFL). The Extracellular portion of the chain corresponds to 198 to 201 (TSYS). The stretch at 202–205 (NITL) is an intramembrane region. An NPA 2 motif is present at residues 206 to 208 (NPA). An intramembrane region (helical) is located at residues 206-219 (NPARDLGPRIFLSL). Residues 220-234 (IGWGKLAFTGDDNII) lie on the Extracellular side of the membrane. Residues 235–259 (FPYFLIPTIAPIIGINLGGWIYILY) traverse the membrane as a helical segment. Topologically, residues 260–262 (IKK) are cytoplasmic.

Belongs to the MIP/aquaporin (TC 1.A.8) family.

It localises to the cell membrane. The catalysed reaction is glycerol(in) = glycerol(out). Its function is as follows. Mediates glycerol diffusion across the cytoplasmic membrane via a pore-type mechanism. The sequence is that of Glycerol uptake facilitator protein (glpF) from Buchnera aphidicola subsp. Schizaphis graminum (strain Sg).